We begin with the raw amino-acid sequence, 622 residues long: Probable methionine--tRNA ligase, mitochondrial (622 aa).

The short motif at 67-79 (PIFYVNASPHVGH) is the 'HIGH' region element. The 'KMSKS' region motif lies at 366 to 370 (KMSKS). ATP is bound at residue Lys-369. Positions 592–622 (LDDIKGMGPDAGSKKHSSGNKPSSGNKKPTA) are disordered. Over residues 610–622 (GNKPSSGNKKPTA) the composition is skewed to low complexity.

This sequence belongs to the class-I aminoacyl-tRNA synthetase family.

The protein localises to the mitochondrion matrix. It catalyses the reaction tRNA(Met) + L-methionine + ATP = L-methionyl-tRNA(Met) + AMP + diphosphate. In Neurospora crassa (strain ATCC 24698 / 74-OR23-1A / CBS 708.71 / DSM 1257 / FGSC 987), this protein is Probable methionine--tRNA ligase, mitochondrial.